A 61-amino-acid polypeptide reads, in one-letter code: MAKKSLKVKQSRPNKFSVRDYTRCLRCGRARAVLSHFGVCRLCFRELAYAGAIPGVKKASW.

Zn(2+)-binding residues include Cys-24, Cys-27, Cys-40, and Cys-43.

It belongs to the universal ribosomal protein uS14 family. Zinc-binding uS14 subfamily. Part of the 30S ribosomal subunit. Contacts proteins S3 and S10. Zn(2+) is required as a cofactor.

Functionally, binds 16S rRNA, required for the assembly of 30S particles and may also be responsible for determining the conformation of the 16S rRNA at the A site. The chain is Small ribosomal subunit protein uS14 from Mycoplasma genitalium (strain ATCC 33530 / DSM 19775 / NCTC 10195 / G37) (Mycoplasmoides genitalium).